The chain runs to 154 residues: dCTP deaminase (154 aa).

DCTP-binding positions include 79–84, aspartate 95, glutamine 124, and tyrosine 138; that span reads RSSLAR.

It belongs to the dCTP deaminase family. In terms of assembly, homotrimer.

The enzyme catalyses dCTP + H2O + H(+) = dUTP + NH4(+). It functions in the pathway pyrimidine metabolism; dUMP biosynthesis; dUMP from dCTP (dUTP route): step 1/2. In terms of biological role, catalyzes the deamination of dCTP to dUTP. This is dCTP deaminase from Pyrococcus abyssi (strain GE5 / Orsay).